A 216-amino-acid polypeptide reads, in one-letter code: Uracil-DNA glycosylase (216 aa).

Residue aspartate 60 is the Proton acceptor of the active site.

The protein belongs to the uracil-DNA glycosylase (UDG) superfamily. UNG family.

The protein resides in the cytoplasm. It carries out the reaction Hydrolyzes single-stranded DNA or mismatched double-stranded DNA and polynucleotides, releasing free uracil.. Excises uracil residues from the DNA which can arise as a result of misincorporation of dUMP residues by DNA polymerase or due to deamination of cytosine. The protein is Uracil-DNA glycosylase of Psychromonas ingrahamii (strain DSM 17664 / CCUG 51855 / 37).